We begin with the raw amino-acid sequence, 468 residues long: Tissue alpha-L-fucosidase (468 aa).

The first 22 residues, 1 to 22 (MRSWVVGARLLLLLQLVLVLGA), serve as a signal peptide directing secretion. Phosphothreonine is present on T173. N-linked (GlcNAc...) asparagine glycans are attached at residues N244, N271, and N320.

This sequence belongs to the glycosyl hydrolase 29 family. In terms of assembly, homotetramer.

The protein resides in the lysosome. It carries out the reaction an alpha-L-fucoside + H2O = L-fucose + an alcohol. The enzyme catalyses a neolactoside IV(2)-alpha-Fuc-nLc4Cer(d18:1(4E)) + H2O = a neolactoside nLc4Cer(d18:1(4E)) + L-fucose. It catalyses the reaction a neolactoside IV(2)-alpha-Fuc-nLc4Cer(d18:0) + H2O = a neolactoside nLc4Cer(d18:0) + L-fucose. In terms of biological role, alpha-L-fucosidase is responsible for hydrolyzing the alpha-1,6-linked fucose joined to the reducing-end N-acetylglucosamine of the carbohydrate moieties of glycoproteins. In Bos taurus (Bovine), this protein is Tissue alpha-L-fucosidase (FUCA1).